The following is a 449-amino-acid chain: UPF0761 membrane protein Cpha266_1653 (449 aa).

Transmembrane regions (helical) follow at residues 77 to 97 (LLSL…FPVF), 133 to 153 (SVPL…ISTI), 173 to 193 (FTLY…SLVA), 214 to 234 (LLSF…YMLV), 244 to 264 (AVYG…WFVF), and 277 to 297 (GALS…VVVL).

The protein belongs to the UPF0761 family.

The protein resides in the cell inner membrane. The chain is UPF0761 membrane protein Cpha266_1653 from Chlorobium phaeobacteroides (strain DSM 266 / SMG 266 / 2430).